Reading from the N-terminus, the 194-residue chain is Serine/threonine-protein kinase mos (194 aa).

The Protein kinase domain maps to 47–194; the sequence is LCLLHLLGSG…HLDLKPANIF (148 aa). Residues 53 to 61 and K74 each bind ATP; that span reads LGSGGFGSV. Catalysis depends on D187, which acts as the Proton acceptor.

This sequence belongs to the protein kinase superfamily. Ser/Thr protein kinase family.

The enzyme catalyses L-seryl-[protein] + ATP = O-phospho-L-seryl-[protein] + ADP + H(+). The catalysed reaction is L-threonyl-[protein] + ATP = O-phospho-L-threonyl-[protein] + ADP + H(+). In Atheris squamigera (Variable bush viper), this protein is Serine/threonine-protein kinase mos (MOS).